The primary structure comprises 312 residues: Ribose-phosphate pyrophosphokinase (312 aa).

Residues 38–40 (DGE) and 97–98 (RQ) contribute to the ATP site. Mg(2+)-binding residues include His131 and Asp170. Residue Lys193 is part of the active site. D-ribose 5-phosphate is bound by residues Arg195, Asp219, and 223-227 (DTAGT).

It belongs to the ribose-phosphate pyrophosphokinase family. Class I subfamily. As to quaternary structure, homohexamer. Mg(2+) serves as cofactor.

It is found in the cytoplasm. The catalysed reaction is D-ribose 5-phosphate + ATP = 5-phospho-alpha-D-ribose 1-diphosphate + AMP + H(+). The protein operates within metabolic intermediate biosynthesis; 5-phospho-alpha-D-ribose 1-diphosphate biosynthesis; 5-phospho-alpha-D-ribose 1-diphosphate from D-ribose 5-phosphate (route I): step 1/1. Involved in the biosynthesis of the central metabolite phospho-alpha-D-ribosyl-1-pyrophosphate (PRPP) via the transfer of pyrophosphoryl group from ATP to 1-hydroxyl of ribose-5-phosphate (Rib-5-P). This Leptospira interrogans serogroup Icterohaemorrhagiae serovar copenhageni (strain Fiocruz L1-130) protein is Ribose-phosphate pyrophosphokinase.